The following is a 191-amino-acid chain: Ribosomal RNA large subunit methyltransferase E (191 aa).

Residues glycine 49, tryptophan 51, aspartate 66, aspartate 82, and aspartate 105 each coordinate S-adenosyl-L-methionine. Residue lysine 145 is the Proton acceptor of the active site.

Belongs to the class I-like SAM-binding methyltransferase superfamily. RNA methyltransferase RlmE family.

The protein localises to the cytoplasm. The enzyme catalyses uridine(2552) in 23S rRNA + S-adenosyl-L-methionine = 2'-O-methyluridine(2552) in 23S rRNA + S-adenosyl-L-homocysteine + H(+). Functionally, specifically methylates the uridine in position 2552 of 23S rRNA at the 2'-O position of the ribose in the fully assembled 50S ribosomal subunit. The sequence is that of Ribosomal RNA large subunit methyltransferase E from Archaeoglobus fulgidus (strain ATCC 49558 / DSM 4304 / JCM 9628 / NBRC 100126 / VC-16).